The following is a 193-amino-acid chain: Peptidyl-tRNA hydrolase (193 aa).

Tyrosine 17 serves as a coordination point for tRNA. Histidine 22 (proton acceptor) is an active-site residue. Positions 68, 70, and 116 each coordinate tRNA.

It belongs to the PTH family. As to quaternary structure, monomer.

Its subcellular location is the cytoplasm. The enzyme catalyses an N-acyl-L-alpha-aminoacyl-tRNA + H2O = an N-acyl-L-amino acid + a tRNA + H(+). In terms of biological role, hydrolyzes ribosome-free peptidyl-tRNAs (with 1 or more amino acids incorporated), which drop off the ribosome during protein synthesis, or as a result of ribosome stalling. Functionally, catalyzes the release of premature peptidyl moieties from peptidyl-tRNA molecules trapped in stalled 50S ribosomal subunits, and thus maintains levels of free tRNAs and 50S ribosomes. The sequence is that of Peptidyl-tRNA hydrolase from Chromobacterium violaceum (strain ATCC 12472 / DSM 30191 / JCM 1249 / CCUG 213 / NBRC 12614 / NCIMB 9131 / NCTC 9757 / MK).